Reading from the N-terminus, the 197-residue chain is Viral polyamine acetyltransferase (197 aa).

Asn22 provides a ligand contact to acetyl-CoA. The active site involves Glu27. One can recognise an N-acetyltransferase domain in the interval 102-182; that stretch reads SYTPDDKCLY…YQYGITKPFD (81 aa). Ile115, Ser117, Gly121, Gly123, Ala125, Thr126, Thr149, Asn150, and Lys159 together coordinate acetyl-CoA.

It belongs to the acetyltransferase family.

The enzyme catalyses spermine + acetyl-CoA = N(1)-acetylspermine + CoA + H(+). It carries out the reaction spermidine + acetyl-CoA = N(1)-acetylspermidine + CoA + H(+). It catalyses the reaction spermidine + acetyl-CoA = N(8)-acetylspermidine + CoA + H(+). The catalysed reaction is putrescine + acetyl-CoA = N-acetylputrescine + CoA + H(+). The enzyme catalyses cadaverine + acetyl-CoA = N-acetylcadaverine + CoA + H(+). It carries out the reaction sym-homospermidine + acetyl-CoA = N(1)-acetyl-sym-homospermidine + CoA + H(+). Functionally, acetylates polyamines such as spermine, spermidine, cadaverine, homospermidine and putrescine (the latter with low efficiency). May play a role in the regulation of polyamine catabolism in the host during viral replication. In Chlorella (PBCV-1), this protein is Viral polyamine acetyltransferase.